The chain runs to 290 residues: Tubulin beta-4B chain (290 aa).

An MREI motif motif is present at residues 1–4 (MREI). Glutamine 11 is a binding site for GTP. Phosphothreonine is present on threonine 55. At lysine 58 the chain carries N6-acetyllysine. GTP is bound by residues glutamate 69, serine 138, glycine 142, threonine 143, glycine 144, and asparagine 172. Position 69 (glutamate 69) interacts with Mg(2+).

This sequence belongs to the tubulin family. Dimer of alpha and beta chains. A typical microtubule is a hollow water-filled tube with an outer diameter of 25 nm and an inner diameter of 15 nM. Alpha-beta heterodimers associate head-to-tail to form protofilaments running lengthwise along the microtubule wall with the beta-tubulin subunit facing the microtubule plus end conferring a structural polarity. Microtubules usually have 13 protofilaments but different protofilament numbers can be found in some organisms and specialized cells. Component of sperm flagellar doublet microtubules. The cofactor is Mg(2+). Some glutamate residues at the C-terminus are polyglycylated, resulting in polyglycine chains on the gamma-carboxyl group. Glycylation is mainly limited to tubulin incorporated into axonemes (cilia and flagella) whereas glutamylation is prevalent in neuronal cells, centrioles, axonemes, and the mitotic spindle. Both modifications can coexist on the same protein on adjacent residues, and lowering polyglycylation levels increases polyglutamylation, and reciprocally. Cilia and flagella glycylation is required for their stability and maintenance. Flagella glycylation controls sperm motility. In terms of processing, some glutamate residues at the C-terminus are polyglutamylated, resulting in polyglutamate chains on the gamma-carboxyl group. Polyglutamylation plays a key role in microtubule severing by spastin (SPAST). SPAST preferentially recognizes and acts on microtubules decorated with short polyglutamate tails: severing activity by SPAST increases as the number of glutamates per tubulin rises from one to eight, but decreases beyond this glutamylation threshold. Glutamylation is also involved in cilia motility.

The protein resides in the cytoplasm. The protein localises to the cytoskeleton. It is found in the flagellum axoneme. In terms of biological role, tubulin is the major constituent of microtubules, a cylinder consisting of laterally associated linear protofilaments composed of alpha- and beta-tubulin heterodimers. Microtubules grow by the addition of GTP-tubulin dimers to the microtubule end, where a stabilizing cap forms. Below the cap, tubulin dimers are in GDP-bound state, owing to GTPase activity of alpha-tubulin. The polypeptide is Tubulin beta-4B chain (TUBB4B) (Mesocricetus auratus (Golden hamster)).